Here is a 627-residue protein sequence, read N- to C-terminus: Alpha-terpineol synthase, chloroplastic (627 aa).

The N-terminal 53 residues, 1–53 (MAGITGVMNMKLAARPSSGRHSRGCRPAVVPSAGKQMLLVRRHPPGSASWPTR), are a transit peptide targeting the chloroplast. The interval 13–90 (AARPSSGRHS…EDRASRNTSS (78 aa)) is disordered. (2E)-geranyl diphosphate is bound by residues Arg339, Asp376, Asp380, Arg518, and Asp521. Mg(2+)-binding residues include Asp376 and Asp380. The DDXXD motif motif lies at 376–380 (DDTYD). The Mg(2+) site is built by Asp521, Ser525, and Glu529.

The protein belongs to the terpene synthase family. Tpsb subfamily. In terms of assembly, monomer. It depends on Mg(2+) as a cofactor. Mn(2+) is required as a cofactor. Expressed in seedling leaf sheaths and roots.

The protein localises to the plastid. It localises to the chloroplast. The enzyme catalyses (2E)-geranyl diphosphate + H2O = (S)-alpha-terpineol + diphosphate. The catalysed reaction is (2E)-geranyl diphosphate = (4S)-limonene + diphosphate. It carries out the reaction (2E)-geranyl diphosphate = gamma-terpinene + diphosphate. It catalyses the reaction (2E)-geranyl diphosphate = beta-myrcene + diphosphate. The enzyme catalyses (2E)-geranyl diphosphate = terpinolene + diphosphate. The catalysed reaction is (2E)-geranyl diphosphate + H2O = 4-terpineol + diphosphate. The protein operates within secondary metabolite biosynthesis; terpenoid biosynthesis. In terms of biological role, component of the volatile terpenes biosynthesis pathways. Mediates the synthesis of a blend of monoterpenes. Converts mainly geranyl diphosphate to alpha-terpineol. Also triggers the biosynthesis of minor monoterpenes including limonene, gamma-terpinene, beta-myrcene, terpinolene and 4-terpineol. This chain is Alpha-terpineol synthase, chloroplastic, found in Zea mays (Maize).